Consider the following 456-residue polypeptide: Bifunctional protein GlmU (456 aa).

Positions 1–229 (MLNNAMSVVI…LSEVEGVNNR (229 aa)) are pyrophosphorylase. Residues 11 to 14 (LAAG), Lys25, Gln76, 81 to 82 (GT), 103 to 105 (YGD), Gly140, Glu154, Asn169, and Asn227 contribute to the UDP-N-acetyl-alpha-D-glucosamine site. Asp105 is a Mg(2+) binding site. Asn227 serves as a coordination point for Mg(2+). The segment at 230 to 250 (LQLSRLERVYQSEQAEKLLLA) is linker. Positions 251–456 (GVMLRDPARF…EGWRRPVKKK (206 aa)) are N-acetyltransferase. The UDP-N-acetyl-alpha-D-glucosamine site is built by Arg333 and Lys351. His363 serves as the catalytic Proton acceptor. Residues Tyr366 and Asn377 each contribute to the UDP-N-acetyl-alpha-D-glucosamine site. Acetyl-CoA contacts are provided by residues Ala380, 386 to 387 (NY), Ser405, Ala423, and Arg440.

It in the N-terminal section; belongs to the N-acetylglucosamine-1-phosphate uridyltransferase family. In the C-terminal section; belongs to the transferase hexapeptide repeat family. Homotrimer. The cofactor is Mg(2+).

It localises to the cytoplasm. It catalyses the reaction alpha-D-glucosamine 1-phosphate + acetyl-CoA = N-acetyl-alpha-D-glucosamine 1-phosphate + CoA + H(+). The catalysed reaction is N-acetyl-alpha-D-glucosamine 1-phosphate + UTP + H(+) = UDP-N-acetyl-alpha-D-glucosamine + diphosphate. The protein operates within nucleotide-sugar biosynthesis; UDP-N-acetyl-alpha-D-glucosamine biosynthesis; N-acetyl-alpha-D-glucosamine 1-phosphate from alpha-D-glucosamine 6-phosphate (route II): step 2/2. It functions in the pathway nucleotide-sugar biosynthesis; UDP-N-acetyl-alpha-D-glucosamine biosynthesis; UDP-N-acetyl-alpha-D-glucosamine from N-acetyl-alpha-D-glucosamine 1-phosphate: step 1/1. It participates in bacterial outer membrane biogenesis; LPS lipid A biosynthesis. Its function is as follows. Catalyzes the last two sequential reactions in the de novo biosynthetic pathway for UDP-N-acetylglucosamine (UDP-GlcNAc). The C-terminal domain catalyzes the transfer of acetyl group from acetyl coenzyme A to glucosamine-1-phosphate (GlcN-1-P) to produce N-acetylglucosamine-1-phosphate (GlcNAc-1-P), which is converted into UDP-GlcNAc by the transfer of uridine 5-monophosphate (from uridine 5-triphosphate), a reaction catalyzed by the N-terminal domain. This is Bifunctional protein GlmU from Escherichia coli O127:H6 (strain E2348/69 / EPEC).